We begin with the raw amino-acid sequence, 515 residues long: Transcription termination factor Rho (515 aa).

Residues 146-221 (DVLFTGVLDV…VKIKSINDQD (76 aa)) enclose the Rho RNA-BD domain. Residues 264–269 (GKGQRA), 276–281 (KAGKTT), and R307 each bind ATP.

The protein belongs to the Rho family. In terms of assembly, homohexamer. The homohexamer assembles into an open ring structure.

Facilitates transcription termination by a mechanism that involves Rho binding to the nascent RNA, activation of Rho's RNA-dependent ATPase activity, and release of the mRNA from the DNA template. The polypeptide is Transcription termination factor Rho (Borreliella burgdorferi (strain ATCC 35210 / DSM 4680 / CIP 102532 / B31) (Borrelia burgdorferi)).